A 111-amino-acid chain; its full sequence is Cryptic phage CTXphi transcriptional repressor RstR (111 aa).

The HTH cro/C1-type domain occupies 6-60 (IRDLRVERDLNQEEVANGIGVGKNTYLAYEKGTQSPKLETVEKLAKFYGVPIAEL). Positions 17–36 (QEEVANGIGVGKNTYLAYEK) form a DNA-binding region, H-T-H motif.

Functionally, transcriptional repressor of the integrated CTXPhi phage gene rstA2. The protein is Cryptic phage CTXphi transcriptional repressor RstR (rstR) of Vibrio cholerae.